A 123-amino-acid polypeptide reads, in one-letter code: uncharacterized protein (123 aa).

This is an uncharacterized protein from Pasteurella multocida (strain Pm70).